A 208-amino-acid chain; its full sequence is Small ribosomal subunit protein uS4 (208 aa).

In terms of domain architecture, S4 RNA-binding spans 95 to 157 (RRIDNIVYRA…DSLKKLVRSN (63 aa)).

This sequence belongs to the universal ribosomal protein uS4 family. Part of the 30S ribosomal subunit. Contacts protein S5. The interaction surface between S4 and S5 is involved in control of translational fidelity.

Its function is as follows. One of the primary rRNA binding proteins, it binds directly to 16S rRNA where it nucleates assembly of the body of the 30S subunit. With S5 and S12 plays an important role in translational accuracy. This chain is Small ribosomal subunit protein uS4, found in Borrelia duttonii (strain Ly).